The chain runs to 572 residues: Mitochondrial distribution and morphology protein 34 (572 aa).

In terms of domain architecture, SMP-LTD spans M1 to L195. Disordered stretches follow at residues L208–L236, P296–P405, R455–N518, and N551–H572. The span at P296–F347 shows a compositional bias: polar residues. The segment covering R358 to R370 has biased composition (basic residues). A compositionally biased stretch (basic and acidic residues) spans V371–D381. 2 stretches are compositionally biased toward polar residues: residues S387 to I401 and A498 to S511.

The protein belongs to the MDM34 family. As to quaternary structure, component of the ER-mitochondria encounter structure (ERMES) or MDM complex, composed of mmm1, mdm10, mdm12 and mdm34.

It is found in the mitochondrion outer membrane. In terms of biological role, component of the ERMES/MDM complex, which serves as a molecular tether to connect the endoplasmic reticulum (ER) and mitochondria. Components of this complex are involved in the control of mitochondrial shape and protein biogenesis, and function in nonvesicular lipid trafficking between the ER and mitochondria. Mdm34 is required for the interaction of the ER-resident membrane protein mmm1 and the outer mitochondrial membrane-resident beta-barrel protein mdm10. The sequence is that of Mitochondrial distribution and morphology protein 34 from Neosartorya fischeri (strain ATCC 1020 / DSM 3700 / CBS 544.65 / FGSC A1164 / JCM 1740 / NRRL 181 / WB 181) (Aspergillus fischerianus).